A 754-amino-acid chain; its full sequence is Phosphatidylinositol 4-phosphate 5-kinase 7 (754 aa).

8 MORN repeats span residues 16 to 38, 39 to 61, 62 to 84, 85 to 107, 108 to 130, 131 to 153, 154 to 176, and 177 to 198; these read YSGEVKGIIPNGKGKYAWSDGTI, YEGDWDEGKISGKGKLIWSSGAK, YEGDFSGGYLHGFGTMTSPDESV, YSGAWRMNVRHGLGRKEYCNSDL, YDGLWKEGLQDGRGSYSWTNGNR, YIGNWKKGKMCERGVMRWENGDL, YDGFWLNGFRHGSGVYKFADGCL, and YYGTWSRGLKDGKGVFYPAGTK. One can recognise a PIPK domain in the interval 329–750; it reads GEHNYYLMLN…RFVNFLHKVF (422 aa). Residues 710–731 form an activation loop region; it reads YNTKKKVEHTCKSLQYDPMTIS.

It carries out the reaction a 1,2-diacyl-sn-glycero-3-phospho-(1D-myo-inositol 4-phosphate) + ATP = a 1,2-diacyl-sn-glycero-3-phospho-(1D-myo-inositol-4,5-bisphosphate) + ADP + H(+). The protein is Phosphatidylinositol 4-phosphate 5-kinase 7 (PIP5K7) of Arabidopsis thaliana (Mouse-ear cress).